A 263-amino-acid chain; its full sequence is Polyglutamine-binding protein 1 (263 aa).

One can recognise a WW domain in the interval Glu46 to Asp80. Ser94 carries the post-translational modification Phosphoserine. The interval Ser94–Asp263 is disordered. Over residues Ala99–Glu173 the composition is skewed to basic and acidic residues. A run of 14 repeats spans residues Asp104–Ser110, Asp111–Ser117, Asp118–Ser124, Asp125–Ser131, Glu132–Ser138, Asp139–Arg140, Asp141–Arg142, Glu143–Arg144, Asp150–Arg151, Glu152–Arg153, Glu154–Arg155, Asp156–Arg157, Asp158–Arg159, and Asp160–Arg161. Residues Asp104–Ser138 are 5 X 7 AA approximate tandem repeats of D-R-[SG]-H-D-K-S. A 3 X 2 AA tandem repeats of [DE]-R region spans residues Asp139–Arg144. A 6 X 2 AA tandem repeats of [DE]-R region spans residues Asp150–Arg161. The interval Tyr243 to Asn253 is important for interaction with TXNL4A. At Ser245 the chain carries Phosphoserine.

As to quaternary structure, interacts with POU3F2/Brn-2, ATXN1, TXNL4A, HTT and AR. Interaction with ATXN1 correlates positively with the length of the polyglutamine tract. Interacts with RNA polymerase II large subunit in a phosphorylation-dependent manner. Forms a ternary complex with ATXN1 mutant and phosphorylated RNA polymerase II. Interacts (via C-terminus) with TXNL4A and CD2BP2. Interacts (via WW domain) with ATN1 and SF3B1, and may interact with additional splice factors. Interacts (via WW domain) with WBP11; Leading to reduce interaction between PQBP1 and TXNL4A. Interacts with CAPRIN1. Interacts with DDX1. Interacts with SFPQ. Interacts with KHSRP.

The protein resides in the nucleus. It is found in the nucleus speckle. The protein localises to the cytoplasmic granule. Its function is as follows. Intrinsically disordered protein that acts as a scaffold, and which is involved in different processes, such as pre-mRNA splicing, transcription regulation, innate immunity and neuron development. Interacts with splicing-related factors via the intrinsically disordered region and regulates alternative splicing of target pre-mRNA species. May suppress the ability of POU3F2 to transactivate the DRD1 gene in a POU3F2 dependent manner. Can activate transcription directly or via association with the transcription machinery. May be involved in ATXN1 mutant-induced cell death. The interaction with ATXN1 mutant reduces levels of phosphorylated RNA polymerase II large subunit. Involved in the assembly of cytoplasmic stress granule, possibly by participating in the transport of neuronal RNA granules. Also acts as an innate immune sensor of infection by retroviruses, by detecting the presence of reverse-transcribed DNA in the cytosol. Directly binds retroviral reverse-transcribed DNA in the cytosol and interacts with CGAS, leading to activate the cGAS-STING signaling pathway, triggering type-I interferon production. This is Polyglutamine-binding protein 1 (PQBP1) from Bos taurus (Bovine).